The primary structure comprises 704 residues: Boron transporter 1 (704 aa).

Residues 1-35 are Cytoplasmic-facing; it reads MEETFVPFEGIKNDLKGRLMCYKQDWTGGFKAGFR. A helical transmembrane segment spans residues 36–56; sequence ILAPTTYIFFASAIPVISFGE. Residues 57-75 lie on the Extracellular side of the membrane; the sequence is QLERSTDGVLTAVQTLAST. The helical transmembrane segment at 76 to 96 threads the bilayer; that stretch reads AICGMIHSIIGGQPLLILGVA. At 97–120 the chain is on the cytoplasmic side; the sequence is EPTVIMYTFMFNFAKARPELGRDL. The helical transmembrane segment at 121–141 threads the bilayer; it reads FLAWSGWVCVWTALMLFVLAI. The Extracellular portion of the chain corresponds to 142 to 155; sequence CGACSIINRFTRVA. The helical transmembrane segment at 156 to 176 threads the bilayer; sequence GELFGLLIAMLFMQQAIKGLV. Over 177–195 the chain is Cytoplasmic; that stretch reads DEFRIPERENQKLKEFLPS. The helical transmembrane segment at 196-216 threads the bilayer; that stretch reads WRFANGMFALVLSFGLLLTGL. Over 217 to 233 the chain is Extracellular; the sequence is RSRKARSWRYGTGWLRS. Residues 234–254 form a helical membrane-spanning segment; sequence LIADYGVPLMVLVWTGVSYIP. The Cytoplasmic portion of the chain corresponds to 255-289; the sequence is AGDVPKGIPRRLFSPNPWSPGAYGNWTVVKEMLDV. Residues 290 to 310 form a helical membrane-spanning segment; sequence PIVYIIGAFIPASMIAVLYYF. At 311 to 337 the chain is on the extracellular side; sequence DHSVASQLAQQKEFNLRKPSSYHYDLL. A helical transmembrane segment spans residues 338 to 358; that stretch reads LLGFLTLMCGLLGVPPSNGVI. Residues 359–480 are Cytoplasmic-facing; it reads PQSPMHTKSL…STMVGGCVAA (122 aa). Residues 481–501 traverse the membrane as a helical segment; the sequence is MPILKMIPTSVLWGYFAFMAI. The Extracellular portion of the chain corresponds to 502–557; that stretch reads ESLPGNQFWERILLLFTAPSRRFKVLEDYHATFVETVPFKTIAMFTLFQTTYLLIC. Residues 558-578 traverse the membrane as a helical segment; that stretch reads FGLTWIPIAGVMFPLMIMFLI. Residues 579-704 lie on the Cytoplasmic side of the membrane; sequence PVRQYLLPRF…RSPLNQSSSN (126 aa). The interval 641–704 is disordered; the sequence is EFRHTSSPKV…RSPLNQSSSN (64 aa). The segment covering 647-664 has biased composition (low complexity); it reads SPKVTSSSSTPVNNRSLS.

The protein belongs to the anion exchanger (TC 2.A.31.3) family. In terms of tissue distribution, expressed in proximal side of various root cells, notably in the columella, lateral root cap, epidermis and endodermis in tip and elongation zones of the root. Also detected in the epidermis, cortex, endodermis, and stele cells of the root hair zone. Observed in cotyledons and hypocotyls.

Its subcellular location is the cell membrane. The protein localises to the endosome membrane. The protein resides in the vacuole membrane. Efflux-type boron (B) transporter for xylem loading, responsive of boron translocation from roots to shoots under boron limitation. Boron is essential for maintaining the integrity of plants cell walls. The chain is Boron transporter 1 from Arabidopsis thaliana (Mouse-ear cress).